The following is a 1081-amino-acid chain: Isoleucine--tRNA ligase (1081 aa).

Residues 53-63 (PFATGLPHYGN) carry the 'HIGH' region motif. A 'KMSKS' region motif is present at residues 607–611 (KMSKS). ATP is bound at residue Lys-610.

It belongs to the class-I aminoacyl-tRNA synthetase family.

The enzyme catalyses tRNA(Ile) + L-isoleucine + ATP = L-isoleucyl-tRNA(Ile) + AMP + diphosphate. This is Isoleucine--tRNA ligase (ILSA) from Tetrahymena thermophila.